The primary structure comprises 576 residues: MSEEAAYQEDTAVQNTPADALSPVESDSNSALSTPSNKAERDDMKDFDENHEESNNYVEIPKKPASAYVTVSICCLMVAFGGFVFGWDTGTISGFVAQTDFIRRFGMKHHDGTYYLSKVRTGLIVSIFNIGCAIGGIILAKLGDMYGRKMGLIVVVVIYIIGIIIQIASINKWYQYFIGRIISGLGVGGIAVLSPMLISEVSPKHIRGTLVSCYQLMITLGIFLGYCTNYGTKTYTNSVQWRVPLGLGFAWALFMIGGMTFVPESPRYLVEVGKIEEAKRSIALSNKVSADDPAVMAEVEVVQATVEAEKLAGNASWGEIFSTKTKVFQRLIMGAMIQSLQQLTGDNYFFYYGTTVFTAVGLEDSFETSIVLGIVNFASTFVGIFLVERYGRRRCLLWGAASMTACMVVFASVGVTRLWPNGKKNGSSKGAGNCMIVFTCFYLFCFATTWAPIPFVVNSETFPLRVKSKCMAIAQACNWIWGFLIGFFTPFISGAIDFYYGYVFMGCLVFSYFYVFFFVPETKGLTLEEVNTLWEEGVLPWKSPSWVPPNKRGTDYNADDLMHDDQPFYKKMFGKK.

A disordered region spans residues 1 to 56 (MSEEAAYQEDTAVQNTPADALSPVESDSNSALSTPSNKAERDDMKDFDENHEESNN). The Cytoplasmic segment spans residues 1–66 (MSEEAAYQED…YVEIPKKPAS (66 aa)). Residues 25 to 37 (ESDSNSALSTPSN) show a composition bias toward polar residues. A compositionally biased stretch (basic and acidic residues) spans 38 to 54 (KAERDDMKDFDENHEES). Residue Lys45 forms a Glycyl lysine isopeptide (Lys-Gly) (interchain with G-Cter in ubiquitin) linkage. Residues 67–87 (AYVTVSICCLMVAFGGFVFGW) traverse the membrane as a helical segment. Topologically, residues 88–122 (DTGTISGFVAQTDFIRRFGMKHHDGTYYLSKVRTG) are extracellular. The helical transmembrane segment at 123–143 (LIVSIFNIGCAIGGIILAKLG) threads the bilayer. Over 144–149 (DMYGRK) the chain is Cytoplasmic. Residues 150 to 170 (MGLIVVVVIYIIGIIIQIASI) form a helical membrane-spanning segment. The Extracellular portion of the chain corresponds to 171 to 180 (NKWYQYFIGR). Residues 181-201 (IISGLGVGGIAVLSPMLISEV) traverse the membrane as a helical segment. Topologically, residues 202 to 207 (SPKHIR) are cytoplasmic. A helical membrane pass occupies residues 208–228 (GTLVSCYQLMITLGIFLGYCT). At 229-242 (NYGTKTYTNSVQWR) the chain is on the extracellular side. The helical transmembrane segment at 243–263 (VPLGLGFAWALFMIGGMTFVP) threads the bilayer. The Cytoplasmic segment spans residues 264–346 (ESPRYLVEVG…IQSLQQLTGD (83 aa)). A helical transmembrane segment spans residues 347–363 (NYFFYYGTTVFTAVGLE). The Extracellular portion of the chain corresponds to 364-369 (DSFETS). Residues 370–387 (IVLGIVNFASTFVGIFLV) form a helical membrane-spanning segment. Topologically, residues 388–394 (ERYGRRR) are cytoplasmic. Residues 395–415 (CLLWGAASMTACMVVFASVGV) form a helical membrane-spanning segment. The Extracellular portion of the chain corresponds to 416-437 (TRLWPNGKKNGSSKGAGNCMIV). Asn425 carries an N-linked (GlcNAc...) asparagine glycan. The helical transmembrane segment at 438 to 458 (FTCFYLFCFATTWAPIPFVVN) threads the bilayer. The Cytoplasmic portion of the chain corresponds to 459–475 (SETFPLRVKSKCMAIAQ). The helical transmembrane segment at 476–496 (ACNWIWGFLIGFFTPFISGAI) threads the bilayer. Position 497 (Asp497) is a topological domain, extracellular. A helical transmembrane segment spans residues 498 to 518 (FYYGYVFMGCLVFSYFYVFFF). Over 519-576 (VPETKGLTLEEVNTLWEEGVLPWKSPSWVPPNKRGTDYNADDLMHDDQPFYKKMFGKK) the chain is Cytoplasmic.

This sequence belongs to the major facilitator superfamily. Sugar transporter (TC 2.A.1.1) family.

It localises to the cell membrane. Xylose uptake is strongly inhibited by glucose. Functionally, low-affinity glucose transporter. Can also transport xylose. The chain is Low-affinity glucose transporter HXT4 (HXT4) from Saccharomyces cerevisiae (strain ATCC 204508 / S288c) (Baker's yeast).